Here is a 145-residue protein sequence, read N- to C-terminus: Putative pre-16S rRNA nuclease (145 aa).

Belongs to the YqgF nuclease family.

It localises to the cytoplasm. In terms of biological role, could be a nuclease involved in processing of the 5'-end of pre-16S rRNA. This is Putative pre-16S rRNA nuclease from Microcystis aeruginosa (strain NIES-843 / IAM M-2473).